A 20-amino-acid polypeptide reads, in one-letter code: Antifungal protein 2 large subunit (20 aa).

The tract at residues 1-20 (PEDPQRRYQEXQREXRXQQE) is disordered.

Heterodimer of a large and a small subunit.

Functionally, possesses antifungal activity against P.infestans but not F.graminearum. The polypeptide is Antifungal protein 2 large subunit (Malva parviflora (Little mallow)).